Here is a 179-residue protein sequence, read N- to C-terminus: Inosine/xanthosine triphosphatase (179 aa).

Glutamate 71 contributes to the Mg(2+) binding site. 71–72 (EA) is a binding site for substrate.

This sequence belongs to the YjjX NTPase family. In terms of assembly, homodimer. Requires Mg(2+) as cofactor. Mn(2+) is required as a cofactor.

The enzyme catalyses XTP + H2O = XDP + phosphate + H(+). The catalysed reaction is ITP + H2O = IDP + phosphate + H(+). In terms of biological role, phosphatase that hydrolyzes non-canonical purine nucleotides such as XTP and ITP to their respective diphosphate derivatives. Probably excludes non-canonical purines from DNA/RNA precursor pool, thus preventing their incorporation into DNA/RNA and avoiding chromosomal lesions. This is Inosine/xanthosine triphosphatase from Shewanella sp. (strain MR-7).